Reading from the N-terminus, the 863-residue chain is Protein translocase subunit SecA (863 aa).

ATP-binding positions include glutamine 88, glycine 106–threonine 110, and aspartate 496. The tract at residues glutamate 818–lysine 842 is disordered. The Zn(2+) site is built by cysteine 836, cysteine 838, cysteine 847, and cysteine 848.

The protein belongs to the SecA family. In terms of assembly, monomer and homodimer. Part of the essential Sec protein translocation apparatus which comprises SecA, SecYEG and auxiliary proteins SecDF-YajC and YidC. Requires Zn(2+) as cofactor.

It localises to the cell inner membrane. Its subcellular location is the cytoplasm. It catalyses the reaction ATP + H2O + cellular proteinSide 1 = ADP + phosphate + cellular proteinSide 2.. Its function is as follows. Part of the Sec protein translocase complex. Interacts with the SecYEG preprotein conducting channel. Has a central role in coupling the hydrolysis of ATP to the transfer of proteins into and across the cell membrane, serving as an ATP-driven molecular motor driving the stepwise translocation of polypeptide chains across the membrane. The protein is Protein translocase subunit SecA of Nitratiruptor sp. (strain SB155-2).